Consider the following 379-residue polypeptide: Protein OSCP1 (379 aa).

As to expression, predominantly expressed in testis.

Its subcellular location is the basal cell membrane. Its function is as follows. May be involved in drug clearance in the placenta. This chain is Protein OSCP1 (Oscp1), found in Mus musculus (Mouse).